A 377-amino-acid chain; its full sequence is L-arabinitol 4-dehydrogenase (377 aa).

Positions 66, 91, 92, 121, 124, 127, 135, and 176 each coordinate Zn(2+). Residues 203–204, Asp-224, Arg-229, Ile-296, and 320–322 each bind NAD(+); these read PI and QYR.

It belongs to the zinc-containing alcohol dehydrogenase family. Homotetramer. Requires Zn(2+) as cofactor. In terms of processing, the N-terminus is blocked.

It catalyses the reaction L-arabinitol + NAD(+) = L-xylulose + NADH + H(+). It participates in carbohydrate degradation; L-arabinose degradation via L-arabinitol; D-xylulose 5-phosphate from L-arabinose (fungal route): step 2/5. Catalyzes the NAD-dependent oxidation of L-arabinitol to L-xylulose in the fungal L-arabinose catabolic pathway. L-arabinose catabolism is important for using plant material as a carbon source. Can partially compensate for xylitol dehydrogenase in xdh1 mutants. Also oxidizes galactitol to L-xylo-3-hexulose as an alternative to the standard Leloir pathway for D-galactose metabolism. NADP cannot act as a cosubstrate. The polypeptide is L-arabinitol 4-dehydrogenase (lad1) (Hypocrea jecorina (Trichoderma reesei)).